A 237-amino-acid chain; its full sequence is 1-(5-phosphoribosyl)-5-[(5-phosphoribosylamino)methylideneamino] imidazole-4-carboxamide isomerase (237 aa).

D8 serves as the catalytic Proton acceptor. The active-site Proton donor is the D130.

This sequence belongs to the HisA/HisF family.

Its subcellular location is the cytoplasm. The enzyme catalyses 1-(5-phospho-beta-D-ribosyl)-5-[(5-phospho-beta-D-ribosylamino)methylideneamino]imidazole-4-carboxamide = 5-[(5-phospho-1-deoxy-D-ribulos-1-ylimino)methylamino]-1-(5-phospho-beta-D-ribosyl)imidazole-4-carboxamide. It functions in the pathway amino-acid biosynthesis; L-histidine biosynthesis; L-histidine from 5-phospho-alpha-D-ribose 1-diphosphate: step 4/9. In Caldicellulosiruptor saccharolyticus (strain ATCC 43494 / DSM 8903 / Tp8T 6331), this protein is 1-(5-phosphoribosyl)-5-[(5-phosphoribosylamino)methylideneamino] imidazole-4-carboxamide isomerase.